Reading from the N-terminus, the 104-residue chain is PTS system lactose-specific EIIA component (104 aa).

Residues 4–102 (EEATLLGFEI…MKHLIELYKR (99 aa)) enclose the PTS EIIA type-3 domain. The active-site Tele-phosphohistidine intermediate is His-78. Position 78 is a phosphohistidine; by HPr (His-78). Asp-81 contributes to the Mg(2+) binding site.

As to quaternary structure, homotrimer. It depends on Mg(2+) as a cofactor.

The protein localises to the cytoplasm. Its function is as follows. The phosphoenolpyruvate-dependent sugar phosphotransferase system (sugar PTS), a major carbohydrate active transport system, catalyzes the phosphorylation of incoming sugar substrates concomitantly with their translocation across the cell membrane. The enzyme II LacEF PTS system is involved in lactose transport. This chain is PTS system lactose-specific EIIA component, found in Streptococcus mutans serotype c (strain ATCC 700610 / UA159).